The following is a 299-amino-acid chain: Peroxisomal biogenesis factor 19 (299 aa).

The interval 1–63 is disordered; that stretch reads MAAAEEGCDA…SPGDTAKDAL (63 aa). Residue Ala-2 is modified to N-acetylalanine. Residues 2–56 form a docking to the peroxisome membrane and binding to PEX3 region; sequence AAAEEGCDAGVEADRELEELLESALDDFDKAKPSPAPPPTTSAPDASGPQKKSPG. The necessary for PEX19 function on peroxisome biogenesis stretch occupies residues 2–91; it reads AAAEEGCDAG…QATAEFEKAM (90 aa). Residues 16–27 show a composition bias toward acidic residues; that stretch reads RELEELLESALD. Ser-35, Ser-54, and Ser-66 each carry phosphoserine. The residue at position 236 (Thr-236) is a Phosphothreonine. Position 296 is a cysteine methyl ester (Cys-296). The S-farnesyl cysteine moiety is linked to residue Cys-296. Residues 297-299 constitute a propeptide, removed in mature form; that stretch reads LIM.

It belongs to the peroxin-19 family. Interacts with a broad range of peroxisomal membrane proteins, including PEX3, PEX10, PEX11A, PEX11B, PEX12, PEX13, PEX14 and PEX16, PXMP2/PMP22, PXMP4/PMP24, SLC25A17/PMP34, ABCD1/ALDP, ABCD2/ALDRP, and ABCD3/PMP70. Also interacts with the tumor suppressor CDKN2A/p19ARF. Ubiquitous.

Its subcellular location is the cytoplasm. The protein localises to the peroxisome membrane. Its function is as follows. Necessary for early peroxisomal biogenesis. Acts both as a cytosolic chaperone and as an import receptor for peroxisomal membrane proteins (PMPs). Binds and stabilizes newly synthesized PMPs in the cytoplasm by interacting with their hydrophobic membrane-spanning domains, and targets them to the peroxisome membrane by binding to the integral membrane protein PEX3. Excludes CDKN2A from the nucleus and prevents its interaction with MDM2, which results in active degradation of TP53. The protein is Peroxisomal biogenesis factor 19 (PEX19) of Cricetulus griseus (Chinese hamster).